The chain runs to 243 residues: Phosphoribosylaminoimidazole-succinocarboxamide synthase (243 aa).

It belongs to the SAICAR synthetase family.

The catalysed reaction is 5-amino-1-(5-phospho-D-ribosyl)imidazole-4-carboxylate + L-aspartate + ATP = (2S)-2-[5-amino-1-(5-phospho-beta-D-ribosyl)imidazole-4-carboxamido]succinate + ADP + phosphate + 2 H(+). It functions in the pathway purine metabolism; IMP biosynthesis via de novo pathway; 5-amino-1-(5-phospho-D-ribosyl)imidazole-4-carboxamide from 5-amino-1-(5-phospho-D-ribosyl)imidazole-4-carboxylate: step 1/2. This chain is Phosphoribosylaminoimidazole-succinocarboxamide synthase, found in Thermosynechococcus vestitus (strain NIES-2133 / IAM M-273 / BP-1).